A 439-amino-acid polypeptide reads, in one-letter code: DNA 3'-5' translocase XPB2 (439 aa).

A DRD domain region spans residues M1–V54. The region spanning V77–V221 is the Helicase ATP-binding domain. Residues L90 to T97 and R127 each bind ATP. A DEAH box motif is present at residues D174 to H177. The short motif at R205–D207 is the RED motif element. Residues E227–I234 are flexible hinge region. The thM region stretch occupies residues N248 to N307. The region spanning K311–E439 is the Helicase C-terminal domain.

Belongs to the helicase family. RAD25/XPB subfamily. Forms a heterodimer with Bax1.

The enzyme catalyses Couples ATP hydrolysis with the unwinding of duplex DNA by translocating in the 3'-5' direction.. The catalysed reaction is ATP + H2O = ADP + phosphate + H(+). Its function is as follows. ATP-dependent DNA translocase which moves along double-stranded DNA (dsDNA) in a 3'-5' direction, unwinding the DNA. The ThM domain grips the resulting 3'-ssDNA tail and functions as a wedge (particularly Phe-278), breaking dsDNA base pairs, probably using the energy from ATP hydrolysis to move along dsDNA. A DNA-dependent ATPase; double-stranded DNA (dsDNA) stimulates the activity more than single-stranded DNA (ssDNA), while Bax1 stimulates ATPase more. In an in vitro assay had no detectable helicase activity. Binds ssDNA better than dsDNA. Has very low ATPase activity that is stimulated by Bax1; dsDNA, Y-form DNA and a DNA substrate with a 6 base pair (bp) bubble in the center stimulate the XPB2-Bax1 ATPase activity about 10- 20-fold more than the absence of DNA. In an XPB2-Bax1-bubble DNA crystal (12 bp of dsDNA, a 6 base bubble and 6 bp of dsDNA) the short 6 bp arm is unwound. The 2 helicase and the ThM domains of XPB2 with the NTD and CRD domains of Bax1 encircle the DNA, forming a tunnel where the 12 bp dsDNA and the ds-ssDNA junction are located. The ThM domain is wedged between the ssDNA tails, with the 5' ssDNA contacting Bax1 and the 3' ssDNA in a channel in XPB2. Bax1 increases the affinity of XPB2 for forked DNA. The protein is DNA 3'-5' translocase XPB2 of Sulfurisphaera tokodaii (strain DSM 16993 / JCM 10545 / NBRC 100140 / 7) (Sulfolobus tokodaii).